Reading from the N-terminus, the 332-residue chain is Biotin synthase (332 aa).

Residues 53–282 enclose the Radical SAM core domain; that stretch reads HFGKKVKLNM…TKEIRISGGR (230 aa). Positions 71, 75, and 78 each coordinate [4Fe-4S] cluster. [2Fe-2S] cluster contacts are provided by Cys-115, Cys-147, Cys-207, and Arg-277.

It belongs to the radical SAM superfamily. Biotin synthase family. As to quaternary structure, homodimer. It depends on [4Fe-4S] cluster as a cofactor. Requires [2Fe-2S] cluster as cofactor.

The catalysed reaction is (4R,5S)-dethiobiotin + (sulfur carrier)-SH + 2 reduced [2Fe-2S]-[ferredoxin] + 2 S-adenosyl-L-methionine = (sulfur carrier)-H + biotin + 2 5'-deoxyadenosine + 2 L-methionine + 2 oxidized [2Fe-2S]-[ferredoxin]. The protein operates within cofactor biosynthesis; biotin biosynthesis; biotin from 7,8-diaminononanoate: step 2/2. Catalyzes the conversion of dethiobiotin (DTB) to biotin by the insertion of a sulfur atom into dethiobiotin via a radical-based mechanism. This is Biotin synthase from Bacillus cereus (strain ATCC 10987 / NRS 248).